The chain runs to 200 residues: Imidazoleglycerol-phosphate dehydratase (200 aa).

It belongs to the imidazoleglycerol-phosphate dehydratase family.

Its subcellular location is the cytoplasm. The catalysed reaction is D-erythro-1-(imidazol-4-yl)glycerol 3-phosphate = 3-(imidazol-4-yl)-2-oxopropyl phosphate + H2O. It participates in amino-acid biosynthesis; L-histidine biosynthesis; L-histidine from 5-phospho-alpha-D-ribose 1-diphosphate: step 6/9. The protein is Imidazoleglycerol-phosphate dehydratase of Chlorobium limicola (strain DSM 245 / NBRC 103803 / 6330).